A 325-amino-acid polypeptide reads, in one-letter code: Putative ankyrin repeat protein RF_0011 (325 aa).

ANK repeat units follow at residues 63–94, 99–130, and 134–164; these read NGNTTLILAADAGLEEACLKLIPKMSDEAINM, RGQPALVKAMWRDLDSVCIELIPKMSKENINA, and CGRTLLMLAAKKGMTTVSKMFINLMPPEMII.

The polypeptide is Putative ankyrin repeat protein RF_0011 (Rickettsia felis (strain ATCC VR-1525 / URRWXCal2) (Rickettsia azadi)).